Here is a 101-residue protein sequence, read N- to C-terminus: Small ribosomal subunit protein uS14 (101 aa).

This sequence belongs to the universal ribosomal protein uS14 family. In terms of assembly, part of the 30S ribosomal subunit. Contacts proteins S3 and S10.

Functionally, binds 16S rRNA, required for the assembly of 30S particles and may also be responsible for determining the conformation of the 16S rRNA at the A site. The sequence is that of Small ribosomal subunit protein uS14 from Ruegeria sp. (strain TM1040) (Silicibacter sp.).